Consider the following 112-residue polypeptide: Nucleoid-associated protein FTW_0607 (112 aa).

A disordered region spans residues 1-27 (MNFDMSKLMQQAQKMQEQMKKAQQERE). Residues 17-27 (EQMKKAQQERE) show a composition bias toward basic and acidic residues.

This sequence belongs to the YbaB/EbfC family. In terms of assembly, homodimer.

It localises to the cytoplasm. Its subcellular location is the nucleoid. In terms of biological role, binds to DNA and alters its conformation. May be involved in regulation of gene expression, nucleoid organization and DNA protection. The sequence is that of Nucleoid-associated protein FTW_0607 from Francisella tularensis subsp. tularensis (strain WY96-3418).